Reading from the N-terminus, the 597-residue chain is tRNA uridine 5-carboxymethylaminomethyl modification enzyme MnmG (597 aa).

10–15 (GGGHAG) contributes to the FAD binding site. NAD(+) is bound at residue 267-281 (GPRYCPSIEDKVVRF).

It belongs to the MnmG family. As to quaternary structure, homodimer. Heterotetramer of two MnmE and two MnmG subunits. FAD is required as a cofactor.

It is found in the cytoplasm. NAD-binding protein involved in the addition of a carboxymethylaminomethyl (cmnm) group at the wobble position (U34) of certain tRNAs, forming tRNA-cmnm(5)s(2)U34. The chain is tRNA uridine 5-carboxymethylaminomethyl modification enzyme MnmG from Thermus thermophilus (strain ATCC BAA-163 / DSM 7039 / HB27).